The following is a 563-amino-acid chain: IQCJ-SCHIP1 readthrough transcript protein (563 aa).

Positions glutamate 47–leucine 67 constitute an IQ domain. Disordered stretches follow at residues arginine 63–leucine 150, valine 164–valine 295, phenylalanine 312–glutamate 336, and serine 384–aspartate 430. Over residues serine 76–serine 87 the composition is skewed to low complexity. Polar residues predominate over residues methionine 88–proline 97. Residues serine 108–serine 143 show a composition bias toward low complexity. Over residues tryptophan 168 to glutamate 182 the composition is skewed to acidic residues. Basic and acidic residues-rich tracts occupy residues arginine 183–glycine 199 and histidine 229–histidine 238. Residue serine 193 is modified to Phosphoserine. Polar residues predominate over residues arginine 318–glutamine 331. Residues glycine 385–threonine 399 are compositionally biased toward basic and acidic residues. A compositionally biased stretch (polar residues) spans serine 400 to glutamine 411. The interval aspartate 419 to lysine 563 is required for interaction with ankyrins. Over residues threonine 420–aspartate 430 the composition is skewed to acidic residues. Residues isoleucine 500–glutamate 534 adopt a coiled-coil conformation.

In terms of assembly, homooligomer (via coiled coil domain). Interacts (via IQ domain) with calmodulin; the interaction is direct and lost in presence of calcium. Interacts with ANK3 (via ANK repeats); required for localization at axon initial segments (AIS) and nodes of Ranvier. Interacts with SPTBN4. Interacts with KCNQ2 and KCNQ3. As to expression, highly expressed in brain and to a lower extent in heart and kidney.

The protein localises to the cell projection. It localises to the axon. The protein resides in the cytoplasm. In terms of biological role, may play a role in action potential conduction in myelinated cells through the organization of molecular complexes at nodes of Ranvier and axon initial segments. May also play a role in axon outgrowth and guidance. This chain is IQCJ-SCHIP1 readthrough transcript protein, found in Homo sapiens (Human).